We begin with the raw amino-acid sequence, 161 residues long: MAVKIKLTRLGKIRNPQYRIAVADARTRRDGRSIEVIGRYHPKEEPSLIEINSERAQYWLSVGAQPTEPVLKLLKITGDWQKFKGLPGAEGRLKVKPPKPSKLELFNAALAAAEGGPTTEATKPKKKSPAKKAKGGEGDADAAAEKVEASAEGEQTESAES.

The interval glutamate 114 to serine 161 is disordered. Residues proline 124–alanine 133 are compositionally biased toward basic residues.

It belongs to the bacterial ribosomal protein bS16 family.

In Mycobacterium marinum (strain ATCC BAA-535 / M), this protein is Small ribosomal subunit protein bS16.